The primary structure comprises 300 residues: uncharacterized protein (300 aa).

The Periplasmic portion of the chain corresponds to methionine 1 to glycine 7. A helical transmembrane segment spans residues methionine 8–isoleucine 28. One can recognise an EamA 1 domain in the interval valine 16–threonine 145. The Cytoplasmic segment spans residues methionine 29 to leucine 45. Residues phenylalanine 46–leucine 66 traverse the membrane as a helical segment. Residues lysine 67 to aspartate 71 lie on the Periplasmic side of the membrane. A helical membrane pass occupies residues alanine 72–leucine 92. At threonine 93 to alanine 99 the chain is on the cytoplasmic side. Residues alanine 100–alanine 120 traverse the membrane as a helical segment. The Periplasmic segment spans residues arginine 121–arginine 124. Residues proline 125–threonine 145 traverse the membrane as a helical segment. Over histidine 146–serine 151 the chain is Cytoplasmic. Residues leucine 152–tyrosine 172 traverse the membrane as a helical segment. Positions phenylalanine 167–leucine 291 constitute an EamA 2 domain. Over threonine 173–glycine 184 the chain is Periplasmic. Residues threonine 185 to alanine 205 traverse the membrane as a helical segment. The Cytoplasmic portion of the chain corresponds to lysine 206–serine 216. A helical membrane pass occupies residues leucine 217 to leucine 237. Residues lysine 238–serine 263 are Periplasmic-facing. Residues leucine 264–serine 284 form a helical membrane-spanning segment. Residues serine 285–alanine 300 lie on the Cytoplasmic side of the membrane.

It belongs to the EamA transporter family.

The protein resides in the cell inner membrane. This is an uncharacterized protein from Salmonella typhimurium (strain LT2 / SGSC1412 / ATCC 700720).